We begin with the raw amino-acid sequence, 318 residues long: Nitrate reductase [NADH] (318 aa).

The Cytochrome b5 heme-binding domain maps to 216–291 (AKSFTMAEVE…LLEYYIGELA (76 aa)). Residues His251 and His274 each coordinate heme.

This sequence belongs to the nitrate reductase family. As to quaternary structure, homodimer. It depends on FAD as a cofactor. Requires heme as cofactor. Mo-molybdopterin is required as a cofactor.

It catalyses the reaction nitrite + NAD(+) + H2O = nitrate + NADH + H(+). In terms of biological role, nitrate reductase is a key enzyme involved in the first step of nitrate assimilation in plants, fungi and bacteria. This is Nitrate reductase [NADH] from Chlorella vulgaris (Green alga).